A 340-amino-acid polypeptide reads, in one-letter code: N(4)-(Beta-N-acetylglucosaminyl)-L-asparaginase (340 aa).

The signal sequence occupies residues 1-45; sequence MRIIYKQQTMNNNRRDFIKKLGIATAAIAINPLEAKNLLDTSEPK. Catalysis depends on T197, which acts as the Nucleophile. Residues 225 to 228 and 248 to 251 contribute to the substrate site; these read RVGD and TGHG.

It belongs to the Ntn-hydrolase family. Heterotetramer of two alpha and two beta chains arranged as a dimer of alpha/beta heterodimers. Cleaved into an alpha and beta chain by autocatalysis; this activates the enzyme. The N-terminal residue of the beta subunit is responsible for the nucleophile hydrolase activity.

It localises to the periplasm. The catalysed reaction is N(4)-(beta-N-acetyl-D-glucosaminyl)-L-asparagine + H2O = N-acetyl-beta-D-glucosaminylamine + L-aspartate + H(+). In terms of biological role, cleaves the GlcNAc-Asn bond which joins oligosaccharides to the peptide of asparagine-linked glycoproteins. Requires that the glycosylated asparagine moiety is not substituted on its N-(R1) and C- (R2) terminus. The sequence is that of N(4)-(Beta-N-acetylglucosaminyl)-L-asparaginase from Elizabethkingia miricola (Chryseobacterium miricola).